A 474-amino-acid chain; its full sequence is Chromosomal replication initiator protein DnaA (474 aa).

The segment at 1–73 (MTNIEQERWS…LSCWQAEMPE (73 aa)) is domain I, interacts with DnaA modulators. Positions 73 to 130 (EVHRIDLTVRTAMRCAAPAKEQAAPIEPRREDNRAAAHDLRVSATAPVSANHEALGGS) are domain II. The interval 131–353 (PLDPRLTFSS…GAINRLLAHS (223 aa)) is domain III, AAA+ region. ATP-binding residues include Gly-178, Gly-180, Lys-181, and Thr-182. The segment at 354 to 474 (KLNAQPVTLE…VESLKRQLQE (121 aa)) is domain IV, binds dsDNA.

Belongs to the DnaA family. In terms of assembly, oligomerizes as a right-handed, spiral filament on DNA at oriC.

The protein resides in the cytoplasm. Functionally, plays an essential role in the initiation and regulation of chromosomal replication. ATP-DnaA binds to the origin of replication (oriC) to initiate formation of the DNA replication initiation complex once per cell cycle. Binds the DnaA box (a 9 base pair repeat at the origin) and separates the double-stranded (ds)DNA. Forms a right-handed helical filament on oriC DNA; dsDNA binds to the exterior of the filament while single-stranded (ss)DNA is stabiized in the filament's interior. The ATP-DnaA-oriC complex binds and stabilizes one strand of the AT-rich DNA unwinding element (DUE), permitting loading of DNA polymerase. After initiation quickly degrades to an ADP-DnaA complex that is not apt for DNA replication. Binds acidic phospholipids. The chain is Chromosomal replication initiator protein DnaA from Rhodopseudomonas palustris (strain BisA53).